The primary structure comprises 160 residues: Eosinophil cationic protein (160 aa).

An N-terminal signal peptide occupies residues 1-27 (MVPKLFTPQICLLLLLGLMGVEGSLHA). Residues 28 to 72 (RPPQFTKAQWFAIQHINVNPPRCTIAMRVINNYQRRCKNQNTFLR) form a required for nearly all of the bactericidal activities; partially involved in LPS-binding region. His-42 serves as the catalytic Proton acceptor. Disulfide bonds link Cys-50/Cys-110, Cys-64/Cys-123, Cys-82/Cys-138, and Cys-89/Cys-98. At Tyr-60 the chain carries 3'-nitrotyrosine. 65 to 69 (KNQNT) is a substrate binding site. Asn-84, Asn-92, and Asn-119 each carry an N-linked (GlcNAc...) asparagine glycan. His-155 (proton donor) is an active-site residue.

This sequence belongs to the pancreatic ribonuclease family. Interacts with bacterial lipopolysaccharide (LPS) and lipoteichoic acid (LTA). In vitro interacts with phospholipid bilayers.

It localises to the secreted. Cytotoxin and helminthotoxin with low-efficiency ribonuclease activity. Possesses a wide variety of biological activities. Exhibits antibacterial activity. This chain is Eosinophil cationic protein (RNASE3), found in Macaca nemestrina (Pig-tailed macaque).